The primary structure comprises 285 residues: Ribosomal RNA small subunit methyltransferase I (285 aa).

The protein belongs to the methyltransferase superfamily. RsmI family.

The protein resides in the cytoplasm. The enzyme catalyses cytidine(1402) in 16S rRNA + S-adenosyl-L-methionine = 2'-O-methylcytidine(1402) in 16S rRNA + S-adenosyl-L-homocysteine + H(+). In terms of biological role, catalyzes the 2'-O-methylation of the ribose of cytidine 1402 (C1402) in 16S rRNA. The polypeptide is Ribosomal RNA small subunit methyltransferase I (Mycobacterium tuberculosis (strain CDC 1551 / Oshkosh)).